We begin with the raw amino-acid sequence, 226 residues long: MDARKEGLPLETLFSDQYPQVRRWLAPFILACSLYFLLWIPVDQPSWVSALIKCQPILCLVVFLWAVAPGGSSTWLLQGALVCSAVGDACLIWPEAFFYGTAAFSVAHLFYLGAFGLTPLQPGLLLCTTLASLTYYSFLLLHLEQGMVLPVMAYGLILNSMLWRSLVWGGSASWGAVLFTFSDGVLAWDTFVYSLPFARLVTMSTYYAAQLLLILSALRNPGLKTH.

At 1 to 23 (MDARKEGLPLETLFSDQYPQVRR) the chain is on the cytoplasmic side. A helical transmembrane segment spans residues 24 to 40 (WLAPFILACSLYFLLWI). Residues 41–46 (PVDQPS) lie on the Extracellular side of the membrane. A helical membrane pass occupies residues 47 to 68 (WVSALIKCQPILCLVVFLWAVA). Topologically, residues 69 to 74 (PGGSST) are cytoplasmic. The chain crosses the membrane as a helical span at residues 75–93 (WLLQGALVCSAVGDACLIW). The Extracellular segment spans residues 94 to 99 (PEAFFY). The chain crosses the membrane as a helical span at residues 100–117 (GTAAFSVAHLFYLGAFGL). At 118 to 123 (TPLQPG) the chain is on the cytoplasmic side. Residues 124–140 (LLLCTTLASLTYYSFLL) traverse the membrane as a helical segment. Topologically, residues 141 to 146 (LHLEQG) are extracellular. A helical membrane pass occupies residues 147–163 (MVLPVMAYGLILNSMLW). The Cytoplasmic portion of the chain corresponds to 164-171 (RSLVWGGS). Residues 172–188 (ASWGAVLFTFSDGVLAW) traverse the membrane as a helical segment. Over 189 to 199 (DTFVYSLPFAR) the chain is Extracellular. Residues 200–218 (LVTMSTYYAAQLLLILSAL) form a helical membrane-spanning segment. Topologically, residues 219 to 226 (RNPGLKTH) are cytoplasmic.

It belongs to the TMEM86 family. Homodimer. Enriched in liver. Also detected in brain and testis.

The protein resides in the endoplasmic reticulum membrane. It localises to the cytoplasm. The catalysed reaction is a 1-O-(1Z-alkenyl)-sn-glycero-3-phosphocholine + H2O = a 2,3-saturated aldehyde + sn-glycerol 3-phosphocholine. It carries out the reaction a 1-O-(1Z-alkenyl)-sn-glycero-3-phosphoethanolamine + H2O = a 2,3-saturated aldehyde + sn-glycero-3-phosphoethanolamine. With respect to regulation, competitively inhibited by lysophosphatidic acid. Functionally, catalyzes the hydrolysis of the vinyl ether bond of choline or ethanolamine lysoplasmalogens, forming fatty aldehyde and glycerophosphocholine or glycerophosphoethanolamine, respectively and is specific for the sn-2-deacylated (lyso) form of plasmalogen. This is Lysoplasmalogenase TMEM86B (Tmem86b) from Mus musculus (Mouse).